Reading from the N-terminus, the 531-residue chain is Putative aldehyde dehydrogenase family 7 member A1 homolog (531 aa).

264 to 269 (GSSEIG) lines the NAD(+) pocket. The Proton acceptor role is filled by E286. C320 functions as the Nucleophile in the catalytic mechanism.

It belongs to the aldehyde dehydrogenase family. Homotetramer.

It carries out the reaction an aldehyde + NAD(+) + H2O = a carboxylate + NADH + 2 H(+). The chain is Putative aldehyde dehydrogenase family 7 member A1 homolog (alh-9) from Caenorhabditis elegans.